The chain runs to 272 residues: SWIRM domain-containing protein laf2 (272 aa).

The segment at 86 to 148 (HVGRWANRHS…RRRKSARGNG (63 aa)) is disordered. Low complexity-rich tracts occupy residues 95 to 120 (SNVS…SYSG) and 127 to 136 (RSISSSPSTI). Phosphoserine occurs at positions 130 and 132. Residue T135 is modified to Phosphothreonine. An SWIRM domain is found at 182-272 (LKAEWKGPPL…AFHEVGFFDD (91 aa)).

As to quaternary structure, component of the RPD3C(L) complex.

It localises to the nucleus. Its function is as follows. Component of the RPD3C(L) histone deacetylase complex (HDAC) responsible for the deacetylation of lysine residues on the N-terminal part of the core histones (H2A, H2B, H3 and H4). Histone deacetylation gives a tag for epigenetic repression and plays an important role in transcriptional regulation, cell cycle progression and developmental events. The chain is SWIRM domain-containing protein laf2 (laf2) from Schizosaccharomyces pombe (strain 972 / ATCC 24843) (Fission yeast).